The following is an 84-amino-acid chain: Toxin NvePTx1 (84 aa).

A signal peptide spans 1–21 (MFSARLVLVFAVVLCIQLCNA). Positions 22–34 (SWLDERAMTQEKR) are excised as a propeptide.

Belongs to the sea anemone type 5 potassium channel toxin family. Contains 4 disulfide bonds. In unfertilized eggs and early post-fertilization stages, is expressed uniformly. In gastrulae, the expression becomes spatially-localized and seems to be absent from the oral and aboral poles. In planulae, the expression is clearly observed in the ectoderm in packed gland cells absent from the two body poles, and upon metamorphosis, the expression diminishes. There is two types of gland cells, one large and elongated and another small and round. This toxin is maternally deposited at both protein and RNA levels.

It is found in the secreted. It localises to the nematocyst. Functionally, neurotoxin that is probably only defensive. Acts as a voltage-gated potassium channel (Kv) inhibitor. In vivo, induces a rapid increase in swimming speed on zebrafish larvae, as well as death which occurs between 2 and 18 hours later. This chain is Toxin NvePTx1, found in Nematostella vectensis (Starlet sea anemone).